Reading from the N-terminus, the 940-residue chain is UvrABC system protein A (940 aa).

Residue 31 to 38 (GLSGSGKS) participates in ATP binding. The C4-type zinc-finger motif lies at 252 to 279 (CPHCGYSMRELEPRLFSFNNPAGACPTC). ABC transporter domains follow at residues 309 to 586 (WDQK…PNSL) and 606 to 936 (KDAK…RFLK). 639-646 (GVSGSGKS) provides a ligand contact to ATP. A C4-type zinc finger spans residues 739–765 (CEACQGDGVIKVEMHFLPDVYVPCDVC).

This sequence belongs to the ABC transporter superfamily. UvrA family. As to quaternary structure, forms a heterotetramer with UvrB during the search for lesions.

The protein localises to the cytoplasm. In terms of biological role, the UvrABC repair system catalyzes the recognition and processing of DNA lesions. UvrA is an ATPase and a DNA-binding protein. A damage recognition complex composed of 2 UvrA and 2 UvrB subunits scans DNA for abnormalities. When the presence of a lesion has been verified by UvrB, the UvrA molecules dissociate. This Vibrio cholerae serotype O1 (strain ATCC 39315 / El Tor Inaba N16961) protein is UvrABC system protein A.